The following is a 349-amino-acid chain: tRNA pseudouridine synthase D (349 aa).

Phe27 lines the substrate pocket. Asp80 acts as the Nucleophile in catalysis. Asn129 is a binding site for substrate. A TRUD domain is found at 155-303 (GVPNYFGAQR…VEAARRAMLL (149 aa)). Phe329 contributes to the substrate binding site.

Belongs to the pseudouridine synthase TruD family.

The catalysed reaction is uridine(13) in tRNA = pseudouridine(13) in tRNA. Functionally, responsible for synthesis of pseudouridine from uracil-13 in transfer RNAs. The sequence is that of tRNA pseudouridine synthase D from Shigella dysenteriae serotype 1 (strain Sd197).